A 318-amino-acid chain; its full sequence is Methionyl-tRNA formyltransferase (318 aa).

114–117 is a (6S)-5,6,7,8-tetrahydrofolate binding site; that stretch reads SVLP.

Belongs to the Fmt family.

It carries out the reaction L-methionyl-tRNA(fMet) + (6R)-10-formyltetrahydrofolate = N-formyl-L-methionyl-tRNA(fMet) + (6S)-5,6,7,8-tetrahydrofolate + H(+). Its function is as follows. Attaches a formyl group to the free amino group of methionyl-tRNA(fMet). The formyl group appears to play a dual role in the initiator identity of N-formylmethionyl-tRNA by promoting its recognition by IF2 and preventing the misappropriation of this tRNA by the elongation apparatus. This Bdellovibrio bacteriovorus (strain ATCC 15356 / DSM 50701 / NCIMB 9529 / HD100) protein is Methionyl-tRNA formyltransferase.